The following is a 384-amino-acid chain: FAD-dependent urate hydroxylase (384 aa).

Residues Gly-11, Glu-30–Ala-31, Ser-43, and Val-125 each bind FAD. Residues Asn-178, Arg-204, and Tyr-216–Phe-218 each bind substrate. Residues Asp-285 and Gly-295 to Cys-299 each bind FAD.

This sequence belongs to the FAD-dependent urate hydroxylase family. FAD is required as a cofactor.

The enzyme catalyses urate + NADH + O2 + H(+) = 5-hydroxyisourate + NAD(+) + H2O. The protein operates within purine metabolism; urate degradation. Functionally, catalyzes the hydroxylation of uric acid to 5-hydroxyisourate. This chain is FAD-dependent urate hydroxylase (hpxO), found in Klebsiella oxytoca.